Reading from the N-terminus, the 508-residue chain is Mu-like prophage FluMu protein gp28 (508 aa).

The protein to phage Mu protein gp28.

The chain is Mu-like prophage FluMu protein gp28 from Haemophilus influenzae (strain ATCC 51907 / DSM 11121 / KW20 / Rd).